Reading from the N-terminus, the 361-residue chain is Ribosomal RNA large subunit methyltransferase M (361 aa).

S-adenosyl-L-methionine contacts are provided by residues S187, 220-223 (CPGG), D239, D259, and D276. The active-site Proton acceptor is the K305.

The protein belongs to the class I-like SAM-binding methyltransferase superfamily. RNA methyltransferase RlmE family. RlmM subfamily. As to quaternary structure, monomer.

It is found in the cytoplasm. It catalyses the reaction cytidine(2498) in 23S rRNA + S-adenosyl-L-methionine = 2'-O-methylcytidine(2498) in 23S rRNA + S-adenosyl-L-homocysteine + H(+). Functionally, catalyzes the 2'-O-methylation at nucleotide C2498 in 23S rRNA. The sequence is that of Ribosomal RNA large subunit methyltransferase M from Shewanella sp. (strain MR-4).